A 238-amino-acid polypeptide reads, in one-letter code: Ribonuclease PH (238 aa).

Residues arginine 86 and glycine 124–arginine 126 contribute to the phosphate site.

Belongs to the RNase PH family. As to quaternary structure, homohexameric ring arranged as a trimer of dimers.

It catalyses the reaction tRNA(n+1) + phosphate = tRNA(n) + a ribonucleoside 5'-diphosphate. Functionally, phosphorolytic 3'-5' exoribonuclease that plays an important role in tRNA 3'-end maturation. Removes nucleotide residues following the 3'-CCA terminus of tRNAs; can also add nucleotides to the ends of RNA molecules by using nucleoside diphosphates as substrates, but this may not be physiologically important. Probably plays a role in initiation of 16S rRNA degradation (leading to ribosome degradation) during starvation. The polypeptide is Ribonuclease PH (Shigella boydii serotype 18 (strain CDC 3083-94 / BS512)).